The following is a 281-amino-acid chain: Microtubule-associated protein RP/EB family member 3 (281 aa).

One can recognise a Calponin-homology (CH) domain in the interval 14–116 (NLSRHDMLAW…FIQWFKKFFD (103 aa)). 2 disordered regions span residues 157 to 181 (VPQRTSPTGPKNMQTSGRLSNVAPP) and 260 to 281 (EGFAPPEDDEIEEHQQEDQDEY). Residues 158 to 175 (PQRTSPTGPKNMQTSGRL) show a composition bias toward polar residues. Phosphoserine occurs at positions 162 and 176. One can recognise an EB1 C-terminal domain in the interval 194–264 (GGHEADAQIL…LYATEEGFAP (71 aa)). An APC-binding region spans residues 217-260 (DGLEKERDFYFSKLRDIELICQEHESENSPVISGIIGILYATEE). The tract at residues 217–281 (DGLEKERDFY…EHQQEDQDEY (65 aa)) is DCTN1-binding. Over residues 272–281 (EHQQEDQDEY) the composition is skewed to basic and acidic residues.

This sequence belongs to the MAPRE family. Homodimer. Heterodimer with MAPRE1. Binds monomeric and polymerized GTP-bound tubulin. Interacts with DCTN1 and SRCIN1. Binds to the C-terminal domain of APC. Interacts (via C-terminus) with CLIP1. Interacts with SLAIN2. Interacts with SLAIN1. Interacts with APC2. Interacts with AKAP9. Interacts with PDE4DIP isoform 2/MMG8/SMYLE; this interaction is required for its recruitment to the Golgi apparatus.

Its subcellular location is the cytoplasm. It is found in the cytoskeleton. Functionally, plus-end tracking protein (+TIP) that binds to the plus-end of microtubules and regulates the dynamics of the microtubule cytoskeleton. Promotes microtubule growth. May be involved in spindle function by stabilizing microtubules and anchoring them at centrosomes. Also acts as a regulator of minus-end microtubule organization: interacts with the complex formed by AKAP9 and PDE4DIP, leading to recruit CAMSAP2 to the Golgi apparatus, thereby tethering non-centrosomal minus-end microtubules to the Golgi, an important step for polarized cell movement. Promotes elongation of CAMSAP2-decorated microtubule stretches on the minus-end of microtubules. The protein is Microtubule-associated protein RP/EB family member 3 (Mapre3) of Mus musculus (Mouse).